The primary structure comprises 420 residues: UDP-N-acetylglucosamine 1-carboxyvinyltransferase (420 aa).

22–23 (KN) lines the phosphoenolpyruvate pocket. Arg-93 serves as a coordination point for UDP-N-acetyl-alpha-D-glucosamine. The active-site Proton donor is Cys-117. At Cys-117 the chain carries 2-(S-cysteinyl)pyruvic acid O-phosphothioketal. Asp-307 and Ile-329 together coordinate UDP-N-acetyl-alpha-D-glucosamine.

This sequence belongs to the EPSP synthase family. MurA subfamily.

Its subcellular location is the cytoplasm. It carries out the reaction phosphoenolpyruvate + UDP-N-acetyl-alpha-D-glucosamine = UDP-N-acetyl-3-O-(1-carboxyvinyl)-alpha-D-glucosamine + phosphate. Its pathway is cell wall biogenesis; peptidoglycan biosynthesis. Its function is as follows. Cell wall formation. Adds enolpyruvyl to UDP-N-acetylglucosamine. This chain is UDP-N-acetylglucosamine 1-carboxyvinyltransferase, found in Alteromonas mediterranea (strain DSM 17117 / CIP 110805 / LMG 28347 / Deep ecotype).